The primary structure comprises 346 residues: Annexin A1 (346 aa).

Ala2 is subject to N-acetylalanine. The residue at position 5 (Ser5) is a Phosphoserine; by TRPM7. An Isoglutamyl lysine isopeptide (Gln-Lys) (interchain with K-?) cross-link involves residue Gln19. Tyr21 is modified (phosphotyrosine; by EGFR). A disordered region spans residues 25–47 (VKGSKGGPGSAVSPYPTFNPSSD). 2 positions are modified to phosphoserine: Ser34 and Ser37. Thr41 is subject to Phosphothreonine. Annexin repeat units follow at residues 42–113 (FNPS…ALLK), 114–185 (TPAQ…SLAK), 197–269 (DLAD…VVVK), and 273–344 (SKPM…ALCG). N6-acetyllysine is present on Lys58. Gly59, Val60, Glu62, Lys97, Leu100, Glu105, Met127, Gly129, Gly131, Thr132, and Glu134 together coordinate Ca(2+). Thr136 carries the phosphothreonine modification. Ca(2+)-binding residues include Asp171, Gly210, and Arg213. Lys214 participates in a covalent cross-link: Glycyl lysine isopeptide (Lys-Gly) (interchain with G-Cter in SUMO1); alternate. A Glycyl lysine isopeptide (Lys-Gly) (interchain with G-Cter in SUMO2); alternate cross-link involves residue Lys214. Gly215 contacts Ca(2+). N6-acetyllysine is present on Lys239. Ca(2+)-binding residues include Asp253, Glu255, and Leu256. Residue Lys257 forms a Glycyl lysine isopeptide (Lys-Gly) (interchain with G-Cter in SUMO1) linkage. 4 residues coordinate Ca(2+): Glu261, Met286, Gly288, and Gly290. Lys312 carries the N6-acetyllysine modification. The cysteines at positions 324 and 343 are disulfide-linked. Ca(2+)-binding residues include Leu328, Glu330, and Thr331. A Glycyl lysine isopeptide (Lys-Gly) (interchain with G-Cter in SUMO1) cross-link involves residue Lys332. Glu336 contacts Ca(2+).

Belongs to the annexin family. Homodimer; non-covalently linked. Homodimer; linked by transglutamylation. Homodimers linked by transglutamylation are observed in placenta, but not in other tissues. Interacts with S100A11. Heterotetramer, formed by two molecules each of S100A11 and ANXA1. Interacts with DYSF. Interacts with EGFR. Phosphorylated by EGFR. Phosphorylated by protein kinase C and TRPM7. Phosphorylated in response to EGF treatment. Post-translationally, sumoylated. In terms of processing, proteolytically cleaved by cathepsin CTSG to release the active N-terminal peptide Ac2-26. As to expression, detected in lung and spleen (at protein level).

The protein resides in the nucleus. It localises to the cytoplasm. It is found in the cell projection. The protein localises to the cilium. Its subcellular location is the basolateral cell membrane. The protein resides in the lateral cell membrane. It localises to the early endosome. It is found in the cell membrane. The protein localises to the cytoplasmic vesicle membrane. Its subcellular location is the apical cell membrane. The protein resides in the membrane. It localises to the endosome. It is found in the secreted. The protein localises to the extracellular space. Its subcellular location is the extracellular exosome. The protein resides in the cytoplasmic vesicle. It localises to the secretory vesicle lumen. It is found in the phagocytic cup. Its function is as follows. Plays important roles in the innate immune response as effector of glucocorticoid-mediated responses and regulator of the inflammatory process. Has anti-inflammatory activity. Plays a role in glucocorticoid-mediated down-regulation of the early phase of the inflammatory response. Contributes to the adaptive immune response by enhancing signaling cascades that are triggered by T-cell activation, regulates differentiation and proliferation of activated T-cells. Promotes the differentiation of T-cells into Th1 cells and negatively regulates differentiation into Th2 cells. Has no effect on unstimulated T-cells. Negatively regulates hormone exocytosis via activation of the formyl peptide receptors and reorganization of the actin cytoskeleton. Has high affinity for Ca(2+) and can bind up to eight Ca(2+) ions. Displays Ca(2+)-dependent binding to phospholipid membranes. Plays a role in the formation of phagocytic cups and phagosomes. Plays a role in phagocytosis by mediating the Ca(2+)-dependent interaction between phagosomes and the actin cytoskeleton. In terms of biological role, functions at least in part by activating the formyl peptide receptors and downstream signaling cascades. Promotes chemotaxis of granulocytes and monocytes via activation of the formyl peptide receptors. Promotes rearrangement of the actin cytoskeleton, cell polarization and cell migration. Promotes resolution of inflammation and wound healing. Acts via neutrophil N-formyl peptide receptors to enhance the release of CXCL2. This Sus scrofa (Pig) protein is Annexin A1 (ANXA1).